Here is a 252-residue protein sequence, read N- to C-terminus: Uracil-DNA glycosylase (252 aa).

The active-site Proton acceptor is D87.

It belongs to the uracil-DNA glycosylase (UDG) superfamily. UNG family.

The protein localises to the host nucleus. It catalyses the reaction Hydrolyzes single-stranded DNA or mismatched double-stranded DNA and polynucleotides, releasing free uracil.. Functionally, excises uracil residues from the DNA which can arise as a result of misincorporation of dUMP residues by DNA polymerase or deamination of cytosines. Therefore may reduce deleterious uracil incorporation into the viral genome, particularly in terminally differentiated cells which lack DNA repair enzymes. The sequence is that of Uracil-DNA glycosylase (46) from Alcelaphine herpesvirus 1 (strain C500) (AlHV-1).